A 192-amino-acid chain; its full sequence is Fe/S biogenesis protein NfuA (192 aa).

Residues cysteine 149 and cysteine 152 each coordinate [4Fe-4S] cluster.

It belongs to the NfuA family. As to quaternary structure, homodimer. Requires [4Fe-4S] cluster as cofactor.

Its function is as follows. Involved in iron-sulfur cluster biogenesis. Binds a 4Fe-4S cluster, can transfer this cluster to apoproteins, and thereby intervenes in the maturation of Fe/S proteins. Could also act as a scaffold/chaperone for damaged Fe/S proteins. This is Fe/S biogenesis protein NfuA from Shewanella sediminis (strain HAW-EB3).